The primary structure comprises 66 residues: Scarabaecin (66 aa).

Positions 1 to 26 (MKTLTFYTLLLCAALYSNFFDCKAVA) are cleaved as a signal peptide. C46 and C57 are disulfide-bonded.

It is found in the secreted. Possesses antifungal activity against phytopathogenic fungi such as P.oryzae, R.solani and B.cinerea but not against phytopathogenic bacteria. Shows weak activity against the insect pathogenic fungus B.bassiana and against S.aureus. Binds chitin. The sequence is that of Scarabaecin from Oryctes rhinoceros (Coconut rhinoceros beetle).